Here is a 492-residue protein sequence, read N- to C-terminus: Steroid 21-hydroxylase (492 aa).

R92 and K121 together coordinate heme b. A 17alpha-hydroxyprogesterone-binding site is contributed by R232. R232 contributes to the progesterone binding site. 3 residues coordinate heme b: H364, R425, and C427.

Belongs to the cytochrome P450 family. Requires heme b as cofactor.

Its subcellular location is the endoplasmic reticulum membrane. It is found in the microsome membrane. It carries out the reaction progesterone + reduced [NADPH--hemoprotein reductase] + O2 = 21-hydroxyprogesterone + oxidized [NADPH--hemoprotein reductase] + H2O + H(+). The enzyme catalyses 17alpha-hydroxyprogesterone + reduced [NADPH--hemoprotein reductase] + O2 = 11-deoxycortisol + oxidized [NADPH--hemoprotein reductase] + H2O + H(+). A cytochrome P450 monooxygenase that plays a major role in adrenal steroidogenesis. Catalyzes the hydroxylation at C-21 of progesterone and 17alpha-hydroxyprogesterone to respectively form 11-deoxycorticosterone and 11-deoxycortisol, intermediate metabolites in the biosynthetic pathway of mineralocorticoids and glucocorticoids. Mechanistically, uses molecular oxygen inserting one oxygen atom into a substrate, and reducing the second into a water molecule, with two electrons provided by NADPH via cytochrome P450 reductase (CPR; NADPH-ferrihemoprotein reductase). The chain is Steroid 21-hydroxylase (CYP21) from Sus scrofa (Pig).